The primary structure comprises 245 residues: 5-oxoprolinase subunit A (245 aa).

It belongs to the LamB/PxpA family. In terms of assembly, forms a complex composed of PxpA, PxpB and PxpC.

It carries out the reaction 5-oxo-L-proline + ATP + 2 H2O = L-glutamate + ADP + phosphate + H(+). Functionally, catalyzes the cleavage of 5-oxoproline to form L-glutamate coupled to the hydrolysis of ATP to ADP and inorganic phosphate. The chain is 5-oxoprolinase subunit A from Chromobacterium violaceum (strain ATCC 12472 / DSM 30191 / JCM 1249 / CCUG 213 / NBRC 12614 / NCIMB 9131 / NCTC 9757 / MK).